The chain runs to 294 residues: 2-dehydro-3-deoxy-phosphogluconate/2-dehydro-3-deoxy-6-phosphogalactonate aldolase (294 aa).

Substrate is bound by residues 43–44 (TT), 130–132 (YNY), and 155–157 (KDT). Residue K155 is the Schiff-base intermediate with substrate of the active site.

The protein belongs to the DapA family. KDPG aldolase subfamily. Homotetramer; dimer of dimers.

The catalysed reaction is 2-dehydro-3-deoxy-6-phospho-D-gluconate = D-glyceraldehyde 3-phosphate + pyruvate. It carries out the reaction 2-dehydro-3-deoxy-6-phospho-D-galactonate = D-glyceraldehyde 3-phosphate + pyruvate. It participates in carbohydrate acid metabolism; 2-dehydro-3-deoxy-D-gluconate degradation; D-glyceraldehyde 3-phosphate and pyruvate from 2-dehydro-3-deoxy-D-gluconate: step 2/2. Functionally, involved in the degradation of glucose and galactose via the Entner-Doudoroff pathway. Catalyzes the reversible cleavage of 2-keto-3-deoxy-6-phosphogluconate (KDPG) and 2-keto-3-deoxygluconate (KDG) forming pyruvate and glyceraldehyde 3-phosphate or glyceraldehyde, respectively. It is also able to catalyze the reversible cleavage of 2-keto-3-deoxy-6-phosphogalactonate (KDPGal) and 2-keto-3-deoxygalactonate (KDGal). It is equally active with both D- and L-glyceraldehyde. The protein is 2-dehydro-3-deoxy-phosphogluconate/2-dehydro-3-deoxy-6-phosphogalactonate aldolase of Saccharolobus solfataricus (Sulfolobus solfataricus).